We begin with the raw amino-acid sequence, 715 residues long: Phosphoribosylformylglycinamidine synthase subunit PurL (715 aa).

His33 is an active-site residue. Tyr36 is an ATP binding site. Glu77 serves as a coordination point for Mg(2+). Residues 78 to 81 (SHNH) and Arg100 contribute to the substrate site. The active-site Proton acceptor is the His79. Residue Asp101 participates in Mg(2+) binding. Gln225 is a binding site for substrate. Mg(2+) is bound at residue Asp253. 297–299 (ESQ) provides a ligand contact to substrate. Residues Asn476 and Gly513 each coordinate ATP. Asn514 is a Mg(2+) binding site. Ser516 lines the substrate pocket.

Belongs to the FGAMS family. As to quaternary structure, monomer. Part of the FGAM synthase complex composed of 1 PurL, 1 PurQ and 2 PurS subunits.

The protein resides in the cytoplasm. The enzyme catalyses N(2)-formyl-N(1)-(5-phospho-beta-D-ribosyl)glycinamide + L-glutamine + ATP + H2O = 2-formamido-N(1)-(5-O-phospho-beta-D-ribosyl)acetamidine + L-glutamate + ADP + phosphate + H(+). Its pathway is purine metabolism; IMP biosynthesis via de novo pathway; 5-amino-1-(5-phospho-D-ribosyl)imidazole from N(2)-formyl-N(1)-(5-phospho-D-ribosyl)glycinamide: step 1/2. In terms of biological role, part of the phosphoribosylformylglycinamidine synthase complex involved in the purines biosynthetic pathway. Catalyzes the ATP-dependent conversion of formylglycinamide ribonucleotide (FGAR) and glutamine to yield formylglycinamidine ribonucleotide (FGAM) and glutamate. The FGAM synthase complex is composed of three subunits. PurQ produces an ammonia molecule by converting glutamine to glutamate. PurL transfers the ammonia molecule to FGAR to form FGAM in an ATP-dependent manner. PurS interacts with PurQ and PurL and is thought to assist in the transfer of the ammonia molecule from PurQ to PurL. This is Phosphoribosylformylglycinamidine synthase subunit PurL from Methanosarcina barkeri (strain Fusaro / DSM 804).